Here is a 359-residue protein sequence, read N- to C-terminus: UPF0283 membrane protein Rleg2_1967 (359 aa).

The tract at residues 1–43 (MSKPPSDPPRRPPAAFTYEDEATERHDNGRQAERRRKPESFSE) is disordered. Basic and acidic residues predominate over residues 23–40 (TERHDNGRQAERRRKPES). 2 consecutive transmembrane segments (helical) span residues 77–97 (FGKI…GLWT) and 111–131 (LGYL…ALVI).

This sequence belongs to the UPF0283 family.

The protein resides in the cell inner membrane. The chain is UPF0283 membrane protein Rleg2_1967 from Rhizobium leguminosarum bv. trifolii (strain WSM2304).